The following is a 347-amino-acid chain: uncharacterized protein (347 aa).

Its subcellular location is the cytoplasm. It is found in the nucleus. This is an uncharacterized protein from Schizosaccharomyces pombe (strain 972 / ATCC 24843) (Fission yeast).